The following is a 233-amino-acid chain: Probable transglycosylase IsaA (233 aa).

An N-terminal signal peptide occupies residues 1-29 (MKKTIMASSLAVALGVTGYAASTGHEAHA).

It belongs to the transglycosylase family. IsaA subfamily.

It localises to the secreted. Functionally, is able to cleave peptidoglycan. This is Probable transglycosylase IsaA (isaA) from Staphylococcus aureus (strain bovine RF122 / ET3-1).